A 217-amino-acid chain; its full sequence is 3,4-dihydroxy-2-butanone 4-phosphate synthase (217 aa).

D-ribulose 5-phosphate-binding positions include 37-38, Asp42, 150-154, and Glu174; these read RE and RGGHT. Mg(2+) is bound at residue Glu38. His153 serves as a coordination point for Mg(2+).

This sequence belongs to the DHBP synthase family. Homodimer. The cofactor is Mg(2+). It depends on Mn(2+) as a cofactor.

The catalysed reaction is D-ribulose 5-phosphate = (2S)-2-hydroxy-3-oxobutyl phosphate + formate + H(+). The protein operates within cofactor biosynthesis; riboflavin biosynthesis; 2-hydroxy-3-oxobutyl phosphate from D-ribulose 5-phosphate: step 1/1. Its function is as follows. Catalyzes the conversion of D-ribulose 5-phosphate to formate and 3,4-dihydroxy-2-butanone 4-phosphate. The chain is 3,4-dihydroxy-2-butanone 4-phosphate synthase from Salmonella heidelberg (strain SL476).